The following is a 456-amino-acid chain: Cytochrome P450 monooxygenase avaH (456 aa).

A helical membrane pass occupies residues 243–263 (LMSYFVSVFLVNVALFNAVSI). C403 provides a ligand contact to heme.

This sequence belongs to the cytochrome P450 family. The cofactor is heme.

The protein localises to the membrane. The protein operates within secondary metabolite biosynthesis. In terms of biological role, cytochrome P450 monooxygenase; part of the cluster that mediates the biosynthesis of a highly modified cyclo-arginine-tryptophan dipeptide (cRW). The first step of the pathway is perfornmed by the arginine-containing cyclodipeptide synthase (RCPDS) avaA that acts as the scaffold-generating enzyme and is responsible for formation of the cyclo-Arg-Trp (cRW) diketopiperazine. AvaB then acts as a multifunctional flavoenzyme that is responsible for generating the cyclo-Arg-formylkynurenine DKP, which can be deformylated by avaC. AvaB then further catalyzes an additional N-oxidation followed by cyclization and dehydration. The next step is an N-acetylation of the guanidine group catalyzed by the arginine N-acetyltransferase avaD. The roles of the additional enzymes identified within the ava cluster still have to be determined. The protein is Cytochrome P450 monooxygenase avaH of Aspergillus versicolor.